The chain runs to 299 residues: Tyrosine recombinase XerC (299 aa).

The region spanning 1–85 is the Core-binding (CB) domain; sequence MQNELDAYFE…SVRGLYRYLN (85 aa). The Tyr recombinase domain maps to 106 to 285; that stretch reads RLPRLLDTDR…DFQHLAKVYD (180 aa). Residues Arg-146, Lys-170, His-237, Arg-240, and His-263 contribute to the active site. The O-(3'-phospho-DNA)-tyrosine intermediate role is filled by Tyr-272.

It belongs to the 'phage' integrase family. XerC subfamily. Forms a cyclic heterotetrameric complex composed of two molecules of XerC and two molecules of XerD.

The protein resides in the cytoplasm. Its function is as follows. Site-specific tyrosine recombinase, which acts by catalyzing the cutting and rejoining of the recombining DNA molecules. The XerC-XerD complex is essential to convert dimers of the bacterial chromosome into monomers to permit their segregation at cell division. It also contributes to the segregational stability of plasmids. The polypeptide is Tyrosine recombinase XerC (Stutzerimonas stutzeri (strain A1501) (Pseudomonas stutzeri)).